A 379-amino-acid polypeptide reads, in one-letter code: Chaperone protein DnaJ (379 aa).

The J domain maps to 5–69 (DYYEVLGISK…NKRASYDQFG (65 aa)). The segment at 136–218 (GTTKEISIRK…CHGKGTENKT (83 aa)) adopts a CR-type zinc-finger fold. Zn(2+) is bound by residues cysteine 149, cysteine 152, cysteine 166, cysteine 169, cysteine 192, cysteine 195, cysteine 206, and cysteine 209. CXXCXGXG motif repeat units lie at residues 149 to 156 (CETCHGDG), 166 to 173 (CSYCNGAG), 192 to 199 (CPKCNGSG), and 206 to 213 (CPTCHGKG).

It belongs to the DnaJ family. In terms of assembly, homodimer. Requires Zn(2+) as cofactor.

It localises to the cytoplasm. Functionally, participates actively in the response to hyperosmotic and heat shock by preventing the aggregation of stress-denatured proteins and by disaggregating proteins, also in an autonomous, DnaK-independent fashion. Unfolded proteins bind initially to DnaJ; upon interaction with the DnaJ-bound protein, DnaK hydrolyzes its bound ATP, resulting in the formation of a stable complex. GrpE releases ADP from DnaK; ATP binding to DnaK triggers the release of the substrate protein, thus completing the reaction cycle. Several rounds of ATP-dependent interactions between DnaJ, DnaK and GrpE are required for fully efficient folding. Also involved, together with DnaK and GrpE, in the DNA replication of plasmids through activation of initiation proteins. This is Chaperone protein DnaJ from Staphylococcus aureus (strain USA300 / TCH1516).